A 236-amino-acid polypeptide reads, in one-letter code: Phosphoribosylaminoimidazole-succinocarboxamide synthase (236 aa).

Belongs to the SAICAR synthetase family.

The enzyme catalyses 5-amino-1-(5-phospho-D-ribosyl)imidazole-4-carboxylate + L-aspartate + ATP = (2S)-2-[5-amino-1-(5-phospho-beta-D-ribosyl)imidazole-4-carboxamido]succinate + ADP + phosphate + 2 H(+). The protein operates within purine metabolism; IMP biosynthesis via de novo pathway; 5-amino-1-(5-phospho-D-ribosyl)imidazole-4-carboxamide from 5-amino-1-(5-phospho-D-ribosyl)imidazole-4-carboxylate: step 1/2. This Rickettsia canadensis (strain McKiel) protein is Phosphoribosylaminoimidazole-succinocarboxamide synthase.